Here is a 97-residue protein sequence, read N- to C-terminus: Putative septation protein SpoVG (97 aa).

This sequence belongs to the SpoVG family.

Its function is as follows. Could be involved in septation. The chain is Putative septation protein SpoVG from Borreliella afzelii (strain PKo) (Borrelia afzelii).